The sequence spans 1226 residues: Polyamine-transporting ATPase 13A3 (1226 aa).

The Cytoplasmic portion of the chain corresponds to 1-28; sequence MDKEERKIINQGQEDEMEIYGYNLSRWK. The stretch at 29–49 is an intramembrane region; that stretch reads LAIVSLGVICTGGFLLLLLYW. Residues 50–205 lie on the Cytoplasmic side of the membrane; the sequence is MPEWRVKATC…IAVKVPSVFK (156 aa). S98 is modified (phosphoserine). The helical transmembrane segment at 206-226 threads the bilayer; it reads LLIKEVLNPFYIFQLFSVILW. Residues 227–232 lie on the Lumenal side of the membrane; sequence STDEYY. A helical transmembrane segment spans residues 233-253; it reads YYALAIVVMSIVSIVSSLYSI. Residues 254 to 409 are Cytoplasmic-facing; the sequence is RKQYVMLHDM…KPTDFKLYRD (156 aa). Residues 410 to 430 traverse the membrane as a helical segment; the sequence is AYLFLLCLVAVAGIGFIYTII. The Lumenal segment spans residues 431–448; it reads NSILNEVQVGVIIIESLD. Residues 449-469 traverse the membrane as a helical segment; sequence IITITVPPALPAAMTAGIVYA. The Cytoplasmic segment spans residues 470–940; that stretch reads QRRLKKIGIF…ALITSFCVFK (471 aa). D498 serves as the catalytic 4-aspartylphosphate intermediate. 2 residues coordinate Mg(2+): D498 and T500. ATP is bound by residues 498–500, F628, R684, and D750; that span reads DKT. Residue S817 is modified to Phosphoserine. Position 883 (D883) interacts with Mg(2+). 883-887 contributes to the ATP binding site; sequence DGAND. Residues 941–961 form a helical membrane-spanning segment; the sequence is FMALYSIIQYFSVTLLYSILS. A topological domain (lumenal) is located at residue N962. Residues 963–983 form a helical membrane-spanning segment; that stretch reads LGDFQFLFIDLAIILVVVFTM. At 984–999 the chain is on the cytoplasmic side; the sequence is SLNPAWKELVAQRPPS. A helical transmembrane segment spans residues 1000 to 1020; it reads GLISGALLFSVLSQIIICIGF. At 1021-1073 the chain is on the lumenal side; the sequence is QSLGFFWVKQQPWYEVWHPKSDACNATGSLLWNSSHLDNETELDEHNIQNYEN. The helical transmembrane segment at 1074–1094 threads the bilayer; the sequence is TTVFFISSFQYLIVAIAFSKG. The Cytoplasmic segment spans residues 1095–1105; sequence KPFRQPCYKNY. Residues 1106-1126 form a helical membrane-spanning segment; that stretch reads FFVFSVIFLYVFILFIMLYPV. At 1127–1143 the chain is on the lumenal side; the sequence is ASVDQVLQIVCVPYQWR. A helical transmembrane segment spans residues 1144-1164; that stretch reads VTMLIIVLVNAFVSITVEESV. Residues 1165-1226 are Cytoplasmic-facing; it reads DRWRKCCLPW…NGSCQIITIT (62 aa).

The protein belongs to the cation transport ATPase (P-type) (TC 3.A.3) family. Type V subfamily.

Its subcellular location is the recycling endosome membrane. The protein localises to the early endosome membrane. It is found in the late endosome membrane. The catalysed reaction is putrescine(out) + ATP + H2O = putrescine(in) + ADP + phosphate + H(+). Functionally, ATP-driven pump involved in endocytosis-dependent polyamine transport. Uses ATP as an energy source to transfer polyamine precursor putrescine from the endosomal compartment to the cytosol. This is Polyamine-transporting ATPase 13A3 (ATP13A3) from Macaca fascicularis (Crab-eating macaque).